Here is a 164-residue protein sequence, read N- to C-terminus: Flavodoxin (164 aa).

The Flavodoxin-like domain maps to 4-160 (IGIFFGTDSG…RISKWVEQVK (157 aa)).

It belongs to the flavodoxin family. It depends on FMN as a cofactor.

Its function is as follows. Low-potential electron donor to a number of redox enzymes. This Helicobacter pylori (strain ATCC 700392 / 26695) (Campylobacter pylori) protein is Flavodoxin (fldA).